We begin with the raw amino-acid sequence, 24 residues long: DYE-linked aldehyde dehydrogenase, alpha chain (24 aa).

Heterotetramer composed of an alpha, a beta and two gamma chains. Mo-molybdopterin cytosine dinucleotide serves as cofactor.

Functionally, active with aldehydes and formate esters as substrates. In Amycolatopsis methanolica, this protein is DYE-linked aldehyde dehydrogenase, alpha chain.